The sequence spans 335 residues: 5-dehydro-2-deoxygluconokinase (335 aa).

Belongs to the carbohydrate kinase PfkB family.

The enzyme catalyses 5-dehydro-2-deoxy-D-gluconate + ATP = 6-phospho-5-dehydro-2-deoxy-D-gluconate + ADP + H(+). Its pathway is polyol metabolism; myo-inositol degradation into acetyl-CoA; acetyl-CoA from myo-inositol: step 5/7. Functionally, catalyzes the phosphorylation of 5-dehydro-2-deoxy-D-gluconate (2-deoxy-5-keto-D-gluconate or DKG) to 6-phospho-5-dehydro-2-deoxy-D-gluconate (DKGP). This chain is 5-dehydro-2-deoxygluconokinase, found in Geobacillus kaustophilus (strain HTA426).